A 184-amino-acid polypeptide reads, in one-letter code: MARYGATSTNPAKSASARGSYLRVSFKNTRETAQAINGWELTKAQKYLDQVLDHQRAIPFRRFNSSIGRTAQGKEFGVTKARWPAKSVKFVQGLLQNAAANAEAKGLDATKLYVSHIQVNQAPKQRRRTYRAHGRINKYESSPSHIELVVTEKEEAVAKAAEKKVVRLTSRQRGRIAAQKRISA.

Residue Lys46 forms a Glycyl lysine isopeptide (Lys-Gly) (interchain with G-Cter in ubiquitin) linkage. Position 70 is a phosphothreonine (Thr70).

The protein belongs to the universal ribosomal protein uL22 family. As to quaternary structure, component of the large ribosomal subunit (LSU). Mature yeast ribosomes consist of a small (40S) and a large (60S) subunit. The 40S small subunit contains 1 molecule of ribosomal RNA (18S rRNA) and 33 different proteins (encoded by 57 genes). The large 60S subunit contains 3 rRNA molecules (25S, 5.8S and 5S rRNA) and 46 different proteins (encoded by 81 genes). uL22 is associated with the polypeptide exit tunnel.

It is found in the cytoplasm. Functionally, component of the ribosome, a large ribonucleoprotein complex responsible for the synthesis of proteins in the cell. The small ribosomal subunit (SSU) binds messenger RNAs (mRNAs) and translates the encoded message by selecting cognate aminoacyl-transfer RNA (tRNA) molecules. The large subunit (LSU) contains the ribosomal catalytic site termed the peptidyl transferase center (PTC), which catalyzes the formation of peptide bonds, thereby polymerizing the amino acids delivered by tRNAs into a polypeptide chain. The nascent polypeptides leave the ribosome through a tunnel in the LSU and interact with protein factors that function in enzymatic processing, targeting, and the membrane insertion of nascent chains at the exit of the ribosomal tunnel. The sequence is that of Large ribosomal subunit protein uL22B from Saccharomyces cerevisiae (strain ATCC 204508 / S288c) (Baker's yeast).